The following is a 1124-amino-acid chain: Putative DNA mismatch repair protein mutS homolog L359 (1124 aa).

Position 779 to 786 (779 to 786 (SNNWAGKS)) interacts with ATP.

Belongs to the DNA mismatch repair MutS family.

May be involved in DNA-mismatch repair. The protein is Putative DNA mismatch repair protein mutS homolog L359 of Acanthamoeba polyphaga (Amoeba).